Reading from the N-terminus, the 327-residue chain is Phenylalanine--tRNA ligase alpha subunit (327 aa).

Mg(2+) is bound at residue glutamate 252.

Belongs to the class-II aminoacyl-tRNA synthetase family. Phe-tRNA synthetase alpha subunit type 1 subfamily. In terms of assembly, tetramer of two alpha and two beta subunits. Mg(2+) is required as a cofactor.

Its subcellular location is the cytoplasm. It catalyses the reaction tRNA(Phe) + L-phenylalanine + ATP = L-phenylalanyl-tRNA(Phe) + AMP + diphosphate + H(+). This chain is Phenylalanine--tRNA ligase alpha subunit, found in Hamiltonella defensa subsp. Acyrthosiphon pisum (strain 5AT).